A 526-amino-acid polypeptide reads, in one-letter code: Ribonuclease Y (526 aa).

Residues 10-30 form a helical membrane-spanning segment; the sequence is ITFILLIVVGALGGALVGYFI. In terms of domain architecture, KH spans 216 to 279; sequence TVTVVEIPNE…EVAKRALTIL (64 aa). In terms of domain architecture, HD spans 342 to 435; it reads VLKHSIEVAF…VAAADALSAA (94 aa).

This sequence belongs to the RNase Y family.

Its subcellular location is the cell membrane. Its function is as follows. Endoribonuclease that initiates mRNA decay. This chain is Ribonuclease Y, found in Acholeplasma laidlawii (strain PG-8A).